The sequence spans 275 residues: Dermonecrotic toxin LhSicTox-alphaVI1i (275 aa).

Histidine 5 is a catalytic residue. Mg(2+)-binding residues include glutamate 25 and aspartate 27. The active-site Nucleophile is the histidine 41. Cystine bridges form between cysteine 45-cysteine 51 and cysteine 47-cysteine 192. Aspartate 85 provides a ligand contact to Mg(2+).

Belongs to the arthropod phospholipase D family. Class II subfamily. Mg(2+) serves as cofactor. In terms of tissue distribution, expressed by the venom gland.

The protein localises to the secreted. It carries out the reaction an N-(acyl)-sphingosylphosphocholine = an N-(acyl)-sphingosyl-1,3-cyclic phosphate + choline. It catalyses the reaction an N-(acyl)-sphingosylphosphoethanolamine = an N-(acyl)-sphingosyl-1,3-cyclic phosphate + ethanolamine. The enzyme catalyses a 1-acyl-sn-glycero-3-phosphocholine = a 1-acyl-sn-glycero-2,3-cyclic phosphate + choline. The catalysed reaction is a 1-acyl-sn-glycero-3-phosphoethanolamine = a 1-acyl-sn-glycero-2,3-cyclic phosphate + ethanolamine. In terms of biological role, dermonecrotic toxins cleave the phosphodiester linkage between the phosphate and headgroup of certain phospholipids (sphingolipid and lysolipid substrates), forming an alcohol (often choline) and a cyclic phosphate. This toxin acts on sphingomyelin (SM). It may also act on ceramide phosphoethanolamine (CPE), lysophosphatidylcholine (LPC) and lysophosphatidylethanolamine (LPE), but not on lysophosphatidylserine (LPS), and lysophosphatidylglycerol (LPG). It acts by transphosphatidylation, releasing exclusively cyclic phosphate products as second products. Induces dermonecrosis, hemolysis, increased vascular permeability, edema, inflammatory response, and platelet aggregation. This is Dermonecrotic toxin LhSicTox-alphaVI1i from Loxosceles hirsuta (Recluse spider).